Here is a 300-residue protein sequence, read N- to C-terminus: Transcription initiation factor IIB (300 aa).

The segment at 2 to 34 (TKQKVCPVCGSTEFIYDPERGEIVCARCGYVIE) adopts a TFIIB-type zinc-finger fold. Zn(2+)-binding residues include Cys-7, Cys-10, Cys-26, and Cys-29. Tandem repeats lie at residues 114 to 197 (SELD…ARNL) and 210 to 291 (DYVN…ELVE).

It belongs to the TFIIB family.

In terms of biological role, stabilizes TBP binding to an archaeal box-A promoter. Also responsible for recruiting RNA polymerase II to the pre-initiation complex (DNA-TBP-TFIIB). The protein is Transcription initiation factor IIB of Pyrococcus horikoshii (strain ATCC 700860 / DSM 12428 / JCM 9974 / NBRC 100139 / OT-3).